Here is a 797-residue protein sequence, read N- to C-terminus: Inactive dipeptidyl peptidase 10 (797 aa).

The disordered stretch occupies residues 1–28; the sequence is MKQEQQPTPGARATQSQPADQELGSNSP. The Cytoplasmic portion of the chain corresponds to 1–34; sequence MKQEQQPTPGARATQSQPADQELGSNSPPQRNWK. The chain crosses the membrane as a helical; Signal-anchor for type II membrane protein span at residues 35–55; that stretch reads GIAIALLVILVVCSLITMSVI. Residues 56–797 are Extracellular-facing; sequence LLTPDELTNS…VLPQEPEEDE (742 aa). N-linked (GlcNAc...) asparagine glycosylation is found at Asn64, Asn91, Asn112, and Asn120. Phosphotyrosine occurs at positions 139 and 144. N-linked (GlcNAc...) asparagine glycosylation is found at Asn258, Asn343, Asn518, and Asn749.

This sequence belongs to the peptidase S9B family. DPPIV subfamily. May form oligomers. Interacts with KCND1 and KCND2. Post-translationally, N-glycosylation is important for cell surface expression, specially at Asn-258, which is crucial. As to expression, detected in brain cortex (at protein level). Expressed in the brain, predominantly by neurons and not by glia.

The protein resides in the cell membrane. In terms of biological role, promotes cell surface expression of the potassium channel KCND2. Modulates the activity and gating characteristics of the potassium channel KCND2. Has no dipeptidyl aminopeptidase activity. The chain is Inactive dipeptidyl peptidase 10 (Dpp10) from Mus musculus (Mouse).